The sequence spans 372 residues: 4-hydroxy-3-methylbut-2-en-1-yl diphosphate synthase (flavodoxin) (372 aa).

Residues Cys-270, Cys-273, Cys-305, and Glu-312 each coordinate [4Fe-4S] cluster.

The protein belongs to the IspG family. Requires [4Fe-4S] cluster as cofactor.

It catalyses the reaction (2E)-4-hydroxy-3-methylbut-2-enyl diphosphate + oxidized [flavodoxin] + H2O + 2 H(+) = 2-C-methyl-D-erythritol 2,4-cyclic diphosphate + reduced [flavodoxin]. The protein operates within isoprenoid biosynthesis; isopentenyl diphosphate biosynthesis via DXP pathway; isopentenyl diphosphate from 1-deoxy-D-xylulose 5-phosphate: step 5/6. Converts 2C-methyl-D-erythritol 2,4-cyclodiphosphate (ME-2,4cPP) into 1-hydroxy-2-methyl-2-(E)-butenyl 4-diphosphate. The protein is 4-hydroxy-3-methylbut-2-en-1-yl diphosphate synthase (flavodoxin) of Alcanivorax borkumensis (strain ATCC 700651 / DSM 11573 / NCIMB 13689 / SK2).